Consider the following 285-residue polypeptide: VQ motif-containing protein 20 (285 aa).

Basic and acidic residues predominate over residues 1-10 (MSSTYKDNHP). Residues 1–68 (MSSTYKDNHP…PSPSSFSSAA (68 aa)) form a disordered region. Basic residues predominate over residues 11–23 (YHHHPHHHHHHPK). The VQ signature appears at 91-100 (FMALVQKLTG). Positions 195–218 (YSAVAIPPQPPPHPPPPPPPPSMY) are disordered. Residues 201–216 (PPQPPPHPPPPPPPPS) are compositionally biased toward pro residues.

It localises to the nucleus. May function as negative regulator of plant defense. The chain is VQ motif-containing protein 20 from Arabidopsis thaliana (Mouse-ear cress).